The sequence spans 101 residues: Small ribosomal subunit protein uS14 (101 aa).

A disordered region spans residues 1–22 (MAKVSSIKKNESRKKKSQSLHN). Over residues 11–22 (ESRKKKSQSLHN) the composition is skewed to basic residues.

The protein belongs to the universal ribosomal protein uS14 family. In terms of assembly, part of the 30S ribosomal subunit. Contacts proteins S3 and S10.

Binds 16S rRNA, required for the assembly of 30S particles and may also be responsible for determining the conformation of the 16S rRNA at the A site. In Rickettsia conorii (strain ATCC VR-613 / Malish 7), this protein is Small ribosomal subunit protein uS14.